A 406-amino-acid polypeptide reads, in one-letter code: Tyrosine--tRNA ligase (406 aa).

L-tyrosine is bound at residue tyrosine 35. Positions 40–49 (PTADSLHVGH) match the 'HIGH' region motif. Residues tyrosine 168 and glutamine 172 each coordinate L-tyrosine. A 'KMSKS' region motif is present at residues 228–232 (KMGKT). Position 231 (lysine 231) interacts with ATP. Residues 340 to 405 (STVLDVIAKV…GKKNYNKIEI (66 aa)) form the S4 RNA-binding domain.

It belongs to the class-I aminoacyl-tRNA synthetase family. TyrS type 1 subfamily. Homodimer.

It localises to the cytoplasm. It catalyses the reaction tRNA(Tyr) + L-tyrosine + ATP = L-tyrosyl-tRNA(Tyr) + AMP + diphosphate + H(+). Functionally, catalyzes the attachment of tyrosine to tRNA(Tyr) in a two-step reaction: tyrosine is first activated by ATP to form Tyr-AMP and then transferred to the acceptor end of tRNA(Tyr). This is Tyrosine--tRNA ligase from Clostridium botulinum (strain Eklund 17B / Type B).